The chain runs to 384 residues: Sialyltransferase-like protein 3 (384 aa).

At 1–5 the chain is on the cytoplasmic side; it reads MKRRH. A helical; Signal-anchor for type II membrane protein transmembrane segment spans residues 6–26; the sequence is WSHPSCGLLLLVAVFCLLLVF. At 27-384 the chain is on the lumenal side; sequence RCSQLRHSGD…FRLPPVSFYR (358 aa). Asn-241 is a glycosylation site (N-linked (GlcNAc...) asparagine).

The protein belongs to the glycosyltransferase 29 family.

The protein localises to the golgi apparatus membrane. Possesses sialyltransferase-like activity in vitro. Transfers sialic acid to the glycoprotein asialofetuin. The transferred sialic acid is linked to galactose of Gal-beta-1,3-GalNAc through alpha-2,6-linkage. The chain is Sialyltransferase-like protein 3 from Oryza sativa subsp. japonica (Rice).